The primary structure comprises 332 residues: MGSGYQLLQLPRERFRKTSFLVWVIILFQRAISMPLGIVTNSTLKATEIDQLVCRDKLSSTSQLKSVGLNLEGNGIATDVPSATKRWGFRSGVPPKVVSYEAGEWAENCYNLEIKKSDGSECLPLPPDGVRGFPRCRYVHKVQGTGPCPGDLAFHKNGAFFLYDRLASTVIYRGTTFAEGVIAFLILSEPKKHFWKATPAHEPVNTTDDSTSYYMTLTLSYEMSNFGGEESNTLFKVDNHTYVQLDRPHTPQFLVQLNETLRRNNRLSNSTGRLTWTVDPKIEPDVGEWAFWETKKKLFPTTSWRKLAFPNSINPHQQLLRSEPGGNCPRKN.

Residues 1–33 (MGSGYQLLQLPRERFRKTSFLVWVIILFQRAIS) form the signal peptide. N41 carries N-linked (GlcNAc...) asparagine; by host glycosylation. 2 disulfide bridges follow: C109-C136 and C122-C148. N-linked (GlcNAc...) asparagine; by host glycosylation is found at N205, N239, N258, and N269.

The protein belongs to the filoviruses glycoprotein family.

It is found in the secreted. The protein is Super small secreted glycoprotein (GP) of Homo sapiens (Human).